A 467-amino-acid chain; its full sequence is Proton extrusion protein PxcA (467 aa).

Positions 146–161 are enriched in polar residues; sequence SQVRTTSSQPPENPSL. 2 disordered regions span residues 146–167 and 186–205; these read SQVR…ALRT and PQLI…KADT. Basic and acidic residues predominate over residues 191–203; that stretch reads QRTEQSKKSRGKA. 4 helical membrane-spanning segments follow: residues 249 to 269, 352 to 372, 391 to 411, and 427 to 447; these read FILL…ALIV, IFSV…IMVL, IIIL…WEVI, and FIFL…KYWI.

This sequence belongs to the CemA family.

It localises to the cell inner membrane. Functionally, required for H(+) efflux immediately after light irradiation to form a rapid H(+) concentration gradient across the thylakoid membranes. Together with PxcL, contributes to transient H(+) uptake following dark to light transition. The polypeptide is Proton extrusion protein PxcA (Nostoc sp. (strain PCC 7120 / SAG 25.82 / UTEX 2576)).